A 314-amino-acid polypeptide reads, in one-letter code: L-lactate dehydrogenase (314 aa).

Residues valine 16, aspartate 37, lysine 42, tyrosine 68, and 82–83 contribute to the NAD(+) site; that span reads GV. Substrate is bound by residues glutamine 85 and arginine 91. Residues serine 104, 121 to 123, and threonine 146 each bind NAD(+); that span reads ASN. 123–126 serves as a coordination point for substrate; it reads NPVD. Substrate is bound at residue 151–154; that stretch reads DTTR. Beta-D-fructose 1,6-bisphosphate is bound by residues arginine 156 and histidine 171. Residue histidine 178 is the Proton acceptor of the active site. Tyrosine 223 is subject to Phosphotyrosine. A substrate-binding site is contributed by threonine 232.

It belongs to the LDH/MDH superfamily. LDH family. Homotetramer.

The protein resides in the cytoplasm. It carries out the reaction (S)-lactate + NAD(+) = pyruvate + NADH + H(+). It participates in fermentation; pyruvate fermentation to lactate; (S)-lactate from pyruvate: step 1/1. Allosterically activated by fructose 1,6-bisphosphate (FBP). Functionally, catalyzes the conversion of lactate to pyruvate. The sequence is that of L-lactate dehydrogenase from Lactococcus lactis subsp. cremoris (strain MG1363).